The chain runs to 271 residues: MAFKFKTFAAVGALIGSLALVGCGQDEKDPNHIKVGVIVGAEQQVAEVAQKVAKDKYGLDVELVTFNDYVLPNEALSKGDIDANAFQHKPYLDQQLKDRGYKLVAVGNTFVYPIAGYSKKIKSLDELQDGSQVAVPNDPTNLGRSLLLLQKVGLIKLKDGVGLLPTVLDVVENPKNLKIVELEAPQLPRSLDDAQIALAVINTTYASQIGLTPAKNGIFVEDKDSPYVNLIVTREDNKDAENVKKFVQAYQSDEVYEAANKVFNGGAVKGW.

The first 22 residues, 1-22 (MAFKFKTFAAVGALIGSLALVG), serve as a signal peptide directing secretion. Residue C23 is the site of N-palmitoyl cysteine attachment. A lipid anchor (S-diacylglycerol cysteine) is attached at C23.

The protein belongs to the NlpA lipoprotein family.

The protein localises to the cell membrane. This protein is a component of a D-methionine permease, a binding protein-dependent, ATP-driven transport system. This is D-methionine-binding lipoprotein MetQ (metQ) from Escherichia coli O157:H7.